The chain runs to 122 residues: U19-hexatoxin-Hi1a (122 aa).

The first 18 residues, 1 to 18 (MNTMIGFIVLLVSATVLG), serve as a signal peptide directing secretion. Residues 19 to 80 (DPELDALRKE…YENSNFREKR (62 aa)) constitute a propeptide that is removed on maturation. Cystine bridges form between C81-C96, C88-C101, and C95-C116.

As to expression, expressed by the venom gland.

The protein resides in the secreted. Probable ion channel inhibitor. The chain is U19-hexatoxin-Hi1a from Hadronyche infensa (Fraser island funnel-web spider).